Reading from the N-terminus, the 183-residue chain is Probable chorismate pyruvate-lyase (183 aa).

Arg-79, Leu-115, and Glu-168 together coordinate substrate.

Belongs to the UbiC family.

The protein localises to the cytoplasm. It carries out the reaction chorismate = 4-hydroxybenzoate + pyruvate. It participates in cofactor biosynthesis; ubiquinone biosynthesis. Functionally, removes the pyruvyl group from chorismate, with concomitant aromatization of the ring, to provide 4-hydroxybenzoate (4HB) for the ubiquinone pathway. This chain is Probable chorismate pyruvate-lyase, found in Chromohalobacter salexigens (strain ATCC BAA-138 / DSM 3043 / CIP 106854 / NCIMB 13768 / 1H11).